Consider the following 426-residue polypeptide: Glutamate-1-semialdehyde 2,1-aminomutase (426 aa).

K265 carries the post-translational modification N6-(pyridoxal phosphate)lysine.

This sequence belongs to the class-III pyridoxal-phosphate-dependent aminotransferase family. HemL subfamily. Homodimer. It depends on pyridoxal 5'-phosphate as a cofactor.

The protein localises to the cytoplasm. The catalysed reaction is (S)-4-amino-5-oxopentanoate = 5-aminolevulinate. The protein operates within porphyrin-containing compound metabolism; protoporphyrin-IX biosynthesis; 5-aminolevulinate from L-glutamyl-tRNA(Glu): step 2/2. This Pectobacterium atrosepticum (strain SCRI 1043 / ATCC BAA-672) (Erwinia carotovora subsp. atroseptica) protein is Glutamate-1-semialdehyde 2,1-aminomutase.